The following is a 178-amino-acid chain: Peptide deformylase (178 aa).

Residues C92 and H134 each coordinate Fe cation. The active site involves E135. H138 contacts Fe cation.

This sequence belongs to the polypeptide deformylase family. Requires Fe(2+) as cofactor.

The enzyme catalyses N-terminal N-formyl-L-methionyl-[peptide] + H2O = N-terminal L-methionyl-[peptide] + formate. Its function is as follows. Removes the formyl group from the N-terminal Met of newly synthesized proteins. Requires at least a dipeptide for an efficient rate of reaction. N-terminal L-methionine is a prerequisite for activity but the enzyme has broad specificity at other positions. The protein is Peptide deformylase of Alkalilimnicola ehrlichii (strain ATCC BAA-1101 / DSM 17681 / MLHE-1).